A 316-amino-acid chain; its full sequence is Lys-63-specific deubiquitinase BRCC36 (316 aa).

Alanine 2 is subject to N-acetylalanine. The region spanning 12 to 179 (VHLESDAFLV…YTCFQSIQAQ (168 aa)) is the MPN domain. The Zn(2+) site is built by histidine 122, histidine 124, and aspartate 135. The JAMM motif motif lies at 122 to 135 (HSHPHITVWPSHVD). Serine 258 is subject to Phosphoserine.

It belongs to the peptidase M67A family. BRCC36 subfamily. As to quaternary structure, component of the ARISC complex, at least composed of UIMC1/RAP80, ABRAXAS1, BRCC3/BRCC36, BABAM2 and BABAM1/NBA1. Component of the BRCA1-A complex, at least composed of BRCA1, BARD1, UIMC1/RAP80, ABRAXAS1, BRCC3/BRCC36, BABAM2 and BABAM1/NBA1. In the BRCA1-A complex, interacts directly with ABRAXAS1 and BABAM2. Component of the BRISC complex, at least composed of ABRAXAS2, BRCC3/BRCC36, BABAM2 and BABAM1/NBA1. Identified in a complex with SHMT2 and the other subunits of the BRISC complex. In the BRISC complex, interacts directly with ABRAXAS2. Identified in a complex with ABRAXAS2 and NUMA1. The BRISC complex interacts with the CSN complex. Component of the BRCA1/BRCA2 containing complex (BRCC), which also contains BRCA1, BRCA2, BARD1, BABAM2 and RAD51. BRCC is a ubiquitin E3 ligase complex that enhances cellular survival following DNA damage. Interacts with BRCA1. Binds polyubiquitin. Interacts with PWWP2B. Interacts with HDAC1; this interaction is enhanced in the presence of PWWP2B. Zn(2+) serves as cofactor.

The protein localises to the nucleus. It is found in the cytoplasm. The protein resides in the cytoskeleton. Its subcellular location is the spindle pole. Functionally, metalloprotease that specifically cleaves 'Lys-63'-linked polyubiquitin chains. Does not have activity toward 'Lys-48'-linked polyubiquitin chains. Component of the BRCA1-A complex, a complex that specifically recognizes 'Lys-63'-linked ubiquitinated histones H2A and H2AX at DNA lesions sites, leading to target the BRCA1-BARD1 heterodimer to sites of DNA damage at double-strand breaks (DSBs). In the BRCA1-A complex, it specifically removes 'Lys-63'-linked ubiquitin on histones H2A and H2AX, antagonizing the RNF8-dependent ubiquitination at double-strand breaks (DSBs). Catalytic subunit of the BRISC complex, a multiprotein complex that specifically cleaves 'Lys-63'-linked ubiquitin in various substrates. Mediates the specific 'Lys-63'-specific deubiquitination associated with the COP9 signalosome complex (CSN), via the interaction of the BRISC complex with the CSN complex. The BRISC complex is required for normal mitotic spindle assembly and microtubule attachment to kinetochores via its role in deubiquitinating NUMA1. Plays a role in interferon signaling via its role in the deubiquitination of the interferon receptor IFNAR1; deubiquitination increases IFNAR1 activity by enhancing its stability and cell surface expression. Acts as a regulator of the NLRP3 inflammasome by mediating deubiquitination of NLRP3, leading to NLRP3 inflammasome assembly. Down-regulates the response to bacterial lipopolysaccharide (LPS) via its role in IFNAR1 deubiquitination. Deubiquitinates HDAC1 and PWWP2B leading to their stabilization. This is Lys-63-specific deubiquitinase BRCC36 (BRCC3) from Callithrix jacchus (White-tufted-ear marmoset).